The following is a 428-amino-acid chain: GTPase Obg (428 aa).

Positions 1–158 (MFIDIAKVFI…LSIVLELKLL (158 aa)) constitute an Obg domain. One can recognise an OBG-type G domain in the interval 159-331 (ADVGLLGFPN…VIKEAARMLK (173 aa)). GTP contacts are provided by residues 165–172 (GFPNVGKS), 190–194 (FTTLK), 212–215 (DIPG), 282–285 (NKSD), and 312–314 (SAA). Residues Ser-172 and Thr-192 each contribute to the Mg(2+) site. Residues 345-428 (MYIPEEKKFT…LNDFEFEYLL (84 aa)) enclose the OCT domain.

It belongs to the TRAFAC class OBG-HflX-like GTPase superfamily. OBG GTPase family. Monomer. The cofactor is Mg(2+).

It localises to the cytoplasm. Functionally, an essential GTPase which binds GTP, GDP and possibly (p)ppGpp with moderate affinity, with high nucleotide exchange rates and a fairly low GTP hydrolysis rate. Plays a role in control of the cell cycle, stress response, ribosome biogenesis and in those bacteria that undergo differentiation, in morphogenesis control. The polypeptide is GTPase Obg (Clostridium botulinum (strain Alaska E43 / Type E3)).